The following is a 502-amino-acid chain: UDP-glucuronosyltransferase 2C1 (502 aa).

Residues N177 and N288 are each glycosylated (N-linked (GlcNAc...) asparagine). Residues 466–481 (VVVFLLTCVATIIFLA) traverse the membrane as a helical segment.

The protein belongs to the UDP-glycosyltransferase family.

The protein localises to the microsome membrane. The protein resides in the endoplasmic reticulum membrane. The enzyme catalyses glucuronate acceptor + UDP-alpha-D-glucuronate = acceptor beta-D-glucuronoside + UDP + H(+). UDPGT is of major importance in the conjugation and subsequent elimination of potentially toxic xenobiotics and endogenous compounds. The sequence is that of UDP-glucuronosyltransferase 2C1 (UGT2C1) from Oryctolagus cuniculus (Rabbit).